The following is a 474-amino-acid chain: Shugoshin-1 (474 aa).

4 disordered regions span residues 1-53 (MTST…KPNA), 189-226 (VESQSAVSSNTVCQEPPQDGKQKRMPQRRRSSRLNQGS), 322-356 (NSKQNHLTGSQSSLSFNTVDTPEPPEDNTVKRCSK), and 422-442 (VSMEQRTNQEQDGDCFSRKSN). Composition is skewed to polar residues over residues 12–22 (GSLNPPHSNPS) and 190–201 (ESQSAVSSNTVC). A compositionally biased stretch (basic residues) spans 211-220 (KRMPQRRRSS). Polar residues-rich tracts occupy residues 322-341 (NSKQNHLTGSQSSLSFNTVD) and 422-431 (VSMEQRTNQE).

Belongs to the shugoshin family. As to expression, highly expressed in tissues containing meiocytes. Expressed at much lower level in leaves and pollen-containing flowers.

The protein localises to the nucleus. The protein resides in the chromosome. Its subcellular location is the centromere. In terms of biological role, plays a central role in chromosome cohesion during meiosis I by preventing premature dissociation of cohesin complex from centromeres after prophase, when most of cohesin complex dissociates from chromosomes arms. Required for maintenance of centromeric cohesion before prophase II and correct segregation of chromatids during meiosis II. Has apparently no function in mitosis. The sequence is that of Shugoshin-1 from Zea mays (Maize).